Consider the following 461-residue polypeptide: D-phenylhydantoinase (461 aa).

A divalent metal cation-binding residues include His-59, His-61, and Lys-151. At Lys-151 the chain carries N6-carboxylysine. Tyr-156 contributes to the substrate binding site. 2 residues coordinate a divalent metal cation: His-182 and His-239. Ser-286 is a substrate binding site. Asp-313 contacts a divalent metal cation. Asn-335 lines the substrate pocket.

The protein belongs to the metallo-dependent hydrolases superfamily. Hydantoinase/dihydropyrimidinase family. In terms of assembly, homotetramer. A divalent metal cation serves as cofactor. Post-translationally, carboxylation allows a single lysine to coordinate two divalent metal cations.

It carries out the reaction D-5-phenylhydantoin + H2O = N-carbamoyl-D-phenylglycine + H(+). Catalyzes the stereospecific hydrolysis of the cyclic amide bond of D-hydantoin derivatives with an aromatic side chains at the 5'-position. Has no activity on dihydropyrimidines. The physiological function is unknown. The protein is D-phenylhydantoinase of Escherichia coli O6:K15:H31 (strain 536 / UPEC).